Here is a 371-residue protein sequence, read N- to C-terminus: Vasopressin V2 receptor (371 aa).

Positions Met-1 to Glu-27 are disordered. Over Met-1 to Arg-38 the chain is Extracellular. The span at Ser-15 to Ser-24 shows a compositional bias: low complexity. N-linked (GlcNAc...) asparagine glycosylation is present at Asn-22. The helical transmembrane segment at Ala-39 to Ile-63 threads the bilayer. Residues Arg-64–Phe-77 lie on the Cytoplasmic side of the membrane. A helical membrane pass occupies residues Ile-78–Ala-98. At Trp-99–Arg-113 the chain is on the extracellular side. A helical membrane pass occupies residues Ala-114–Leu-135. The Cytoplasmic segment spans residues Asp-136–Pro-159. The chain crosses the membrane as a helical span at residues Val-160 to Gln-180. The Extracellular segment spans residues Arg-181–Trp-200. Residue Asn-185 is glycosylated (N-linked (GlcNAc...) asparagine). A helical transmembrane segment spans residues Gly-201–Gly-220. Residues Ile-221–Arg-271 lie on the Cytoplasmic side of the membrane. A disordered region spans residues Pro-240–Gly-259. The chain crosses the membrane as a helical span at residues Met-272–Trp-293. The Extracellular segment spans residues Ala-294 to Val-308. A helical membrane pass occupies residues Leu-309–Phe-328. Over Ser-329 to Ser-371 the chain is Cytoplasmic. S-palmitoyl cysteine attachment occurs at residues Cys-341 and Cys-342. Residues His-349 to Ser-371 form a disordered region. A compositionally biased stretch (polar residues) spans Ser-357–Ser-371.

Belongs to the G-protein coupled receptor 1 family. Vasopressin/oxytocin receptor subfamily. Interacts with ARRDC4. Identified in a complex containing at least ARRDC4, V2R and HGS. Interacts with TMEM147. Highly expressed in kidney (at protein level) and moderately expressed in liver (at protein level). No or extremely low expression in left ventricule, muscle, bone and brain (at protein level).

It is found in the cell membrane. Functionally, receptor for arginine vasopressin. The activity of this receptor is mediated by G proteins which activate adenylate cyclase. Involved in renal water reabsorption. The protein is Vasopressin V2 receptor (Avpr2) of Mus musculus (Mouse).